Here is a 277-residue protein sequence, read N- to C-terminus: Secoisolariciresinol dehydrogenase (277 aa).

Residues 24 to 29 (GGASGI), Asp48, Val73, and Asn99 each bind NAD(+). Ser163 lines the substrate pocket. Tyr166 acts as the Proton donor/acceptor in catalysis. Lys170 provides a ligand contact to NAD(+).

Belongs to the short-chain dehydrogenases/reductases (SDR) family. Homotetramer.

It catalyses the reaction (-)-secoisolariciresinol + 2 NAD(+) = (-)-matairesinol + 2 NADH + 2 H(+). In terms of biological role, oxidoreductase involved in lignan biosynthesis. Catalyzes the stereospecific conversion of (-)-secoisolariciresinol to (-)-matairesinol via a lactol intermediate. The protein is Secoisolariciresinol dehydrogenase of Forsythia intermedia (Border forsythia).